We begin with the raw amino-acid sequence, 185 residues long: NEDD8-conjugating enzyme UBE2F (185 aa).

M1 carries the post-translational modification N-acetylmethionine. Residues 1-29 (MLTLASKLKRDDGLKGSRASATASDSTRR) form an interaction with UBA3 region. Residues 32–185 (VRDRLLVKEV…VEDYIKRYAR (154 aa)) form the UBC core domain. The active-site Glycyl thioester intermediate is C116.

This sequence belongs to the ubiquitin-conjugating enzyme family. UBE2F subfamily. As to quaternary structure, interacts with UBA3 and RBX2. Interacts (N-terminally acetylated form) with (via DCUN1 domain) DCUN1D1, DCUN1D2, DCUN1D3, DCUN1D4 and DCUN1D5. The acetylation of Met-1 increases affinity for DCUN1D3 by about 2 orders of magnitude and is crucial for NEDD8 transfer to cullins.

The catalysed reaction is [E1 NEDD8-activating enzyme]-S-[NEDD8 protein]-yl-L-cysteine + [E2 NEDD8-conjugating enzyme]-L-cysteine = [E1 NEDD8-activating enzyme]-L-cysteine + [E2 NEDD8-conjugating enzyme]-S-[NEDD8-protein]-yl-L-cysteine.. It functions in the pathway protein modification; protein neddylation. Functionally, accepts the ubiquitin-like protein NEDD8 from the UBA3-NAE1 E1 complex and catalyzes its covalent attachment to other proteins. Together with the E3 ubiquitin ligase RNF7/RBX2, specifically neddylates cullin-5 (CUL5). Does not neddylate CUL1, CUL2, CUL3, CUL4A or CUL4B. Mediates neddylation of the CUL9-RBX1 complex. The protein is NEDD8-conjugating enzyme UBE2F (UBE2F) of Bos taurus (Bovine).